We begin with the raw amino-acid sequence, 174 residues long: Small ribosomal subunit protein uS5 (174 aa).

Residues 17–80 (WQERVVQIRR…ADGKKHLIDV (64 aa)) form the S5 DRBM domain.

This sequence belongs to the universal ribosomal protein uS5 family. Part of the 30S ribosomal subunit. Contacts proteins S4 and S8.

Functionally, with S4 and S12 plays an important role in translational accuracy. Its function is as follows. Located at the back of the 30S subunit body where it stabilizes the conformation of the head with respect to the body. The polypeptide is Small ribosomal subunit protein uS5 (Thermosynechococcus vestitus (strain NIES-2133 / IAM M-273 / BP-1)).